The chain runs to 334 residues: Malate dehydrogenase, cytoplasmic (334 aa).

Glycine 11–alanine 17 serves as a coordination point for NAD(+). Residues arginine 92 and arginine 98 each contribute to the substrate site. Residues asparagine 105, glutamine 112, and valine 129 to asparagine 131 contribute to the NAD(+) site. Residues asparagine 131 and arginine 162 each coordinate substrate. Histidine 187 functions as the Proton acceptor in the catalytic mechanism.

This sequence belongs to the LDH/MDH superfamily. MDH type 2 family. Homodimer.

It localises to the cytoplasm. It is found in the cytosol. The enzyme catalyses (S)-malate + NAD(+) = oxaloacetate + NADH + H(+). It carries out the reaction (S)-2-hydroxyglutarate + NAD(+) = 2-oxoglutarate + NADH + H(+). Catalyzes the reduction of aromatic alpha-keto acids in the presence of NADH. Plays essential roles in the malate-aspartate shuttle and the tricarboxylic acid cycle, important in mitochondrial NADH supply for oxidative phosphorylation. Catalyzes the reduction of 2-oxoglutarate to 2-hydroxyglutarate, leading to elevated reactive oxygen species (ROS). This Gallus gallus (Chicken) protein is Malate dehydrogenase, cytoplasmic (MDH1).